Reading from the N-terminus, the 64-residue chain is Translation machinery-associated protein 7 homolog (64 aa).

A disordered region spans residues methionine 1–lysine 64. Residues glutamate 21–glycine 50 adopt a coiled-coil conformation. Basic and acidic residues predominate over residues methionine 27–lysine 44.

The protein belongs to the TMA7 family.

The chain is Translation machinery-associated protein 7 homolog from Aedes aegypti (Yellowfever mosquito).